Consider the following 393-residue polypeptide: MRTHLRASLWVLCLASTAFSILAAVNTSPKPTLASAFSGKAGTTAVKANKTTDELLPMVINTWNFTAANVLAWRILKQSKGGLRQTRNAVVEGCSKCEKLQCDRTVGYGGSPDELGETTLDAMVMDGATMDVGAVAGLRRIKDAIKVARHVLEHTQHTMLVGDAASAFANAMGFESESLVTPESKDMWLQWTAENCQPNFWKNVHPDPKVSCGPYKPRPTPLTRWKEDRARNEYEIGRKNHDTIGMIAIDVENNIHAGTSTNGANHKIPGRVGDSPIPGAGAYADNEVGAAVATGDGDVMMRFLPSLLAVEAMRAGKPPAEAAQKGLRRILKHQKDFMGALIAVDRLGNYGAACYGLAEFPFMVSSPAGADRPTRLETVKCIAGQDKVNIVAL.

Residues 1–23 (MRTHLRASLWVLCLASTAFSILA) form the signal peptide. Intrachain disulfides connect cysteine 97-cysteine 102 and cysteine 196-cysteine 212. Residue threonine 243 is the Nucleophile of the active site. Substrate contacts are provided by residues 271 to 274 (RVGD) and 294 to 297 (TGDG). The cysteines at positions 354 and 381 are disulfide-linked.

Belongs to the Ntn-hydrolase family. As to quaternary structure, heterotetramer of two alpha and two beta chains arranged as a dimer of alpha/beta heterodimers. Post-translationally, cleaved into an alpha and beta chain by autocatalysis; this activates the enzyme. The N-terminal residue of the beta subunit is responsible for the nucleophile hydrolase activity.

The catalysed reaction is N(4)-(beta-N-acetyl-D-glucosaminyl)-L-asparagine + H2O = N-acetyl-beta-D-glucosaminylamine + L-aspartate + H(+). Its function is as follows. Cleaves the GlcNAc-Asn bond which joins oligosaccharides to the peptide of asparagine-linked glycoproteins. This Drosophila sechellia (Fruit fly) protein is Putative N(4)-(beta-N-acetylglucosaminyl)-L-asparaginase GM21137.